Here is a 323-residue protein sequence, read N- to C-terminus: Methionyl-tRNA formyltransferase (323 aa).

(6S)-5,6,7,8-tetrahydrofolate is bound at residue 113-116; that stretch reads SLLP.

The protein belongs to the Fmt family.

The enzyme catalyses L-methionyl-tRNA(fMet) + (6R)-10-formyltetrahydrofolate = N-formyl-L-methionyl-tRNA(fMet) + (6S)-5,6,7,8-tetrahydrofolate + H(+). Attaches a formyl group to the free amino group of methionyl-tRNA(fMet). The formyl group appears to play a dual role in the initiator identity of N-formylmethionyl-tRNA by promoting its recognition by IF2 and preventing the misappropriation of this tRNA by the elongation apparatus. The polypeptide is Methionyl-tRNA formyltransferase (Porphyromonas gingivalis (strain ATCC BAA-308 / W83)).